The primary structure comprises 620 residues: MDSHTLIQALIYLGSAALIVPIAVRLGLGSVLGYLIAGCIIGPWGLRLVTDAESILHFAEIGVVLMLFIIGLELDPQRLWKLRAAVFGGGALQMVICGGLLGLFCMLLGLRWQVAELIGMTLALSSTAIAMQAMNERNLMVTQMGRSAFAVLLFQDIAAIPLVAMIPLLAASSASTTMGAFALSALKVAGALVLVVLLGRYVTRPALRFVARSGLREVFSAVALFLVFGFGLLLEEVGLSMAMGAFLAGVLLASSEYRHALESDIEPFKGLLLGLFFIGVGMSIDFGTLIENPLRIVILLLGFLIIKIAMLWLIARPLQVPNKQRRWFAVLLGQGSEFAFVVFGAAQMANVLEPEWAKSLTLAVALSMAATPILLVILNRLEQSSTEEAREADEIDEEQPRVIIAGFGRFGQITGRLLLSSGVKMVVLDHDPDHIETLRKFGMKVFYGDATRMDLLESAGAAKAEVLINAIDDPQTNLQLTEMVKEHFPHLQIIARARDVDHYIRLRQAGVEKPERETFEGALKTGRLALESLGLGPYEARERADVFRRFNIQMVEEMAMVENDTKARAAVYKRTSAMLSEIITEDREHLSLIQRHGWQGTEEGKHTGNMADEPETKPSS.

The next 12 helical transmembrane spans lie at 4–24 (HTLI…PIAV), 26–46 (LGLG…PWGL), 54–74 (SILH…GLEL), 90–110 (GALQ…LLGL), 114–134 (VAEL…MQAM), 149–169 (FAVL…IPLL), 178–198 (MGAF…VVLL), 218–238 (VFSA…EEVG), 270–290 (GLLL…GTLI), 294–314 (LRIV…LWLI), 327–347 (WFAV…GAAQ), and 359–379 (SLTL…VILN). An RCK N-terminal domain is found at 399 to 518 (QPRVIIAGFG…AGVEKPERET (120 aa)). A disordered region spans residues 597–620 (GWQGTEEGKHTGNMADEPETKPSS).

Belongs to the monovalent cation:proton antiporter 2 (CPA2) transporter (TC 2.A.37) family. KefC subfamily. Homodimer. Interacts with the regulatory subunit KefF.

The protein resides in the cell inner membrane. In terms of biological role, pore-forming subunit of a potassium efflux system that confers protection against electrophiles. Catalyzes K(+)/H(+) antiport. This chain is Glutathione-regulated potassium-efflux system protein KefC, found in Escherichia coli (strain SMS-3-5 / SECEC).